A 432-amino-acid polypeptide reads, in one-letter code: Peptidase B (432 aa).

K196 and D201 together coordinate Mn(2+). K208 is an active-site residue. Mn(2+)-binding residues include D219, D278, and E280. The active site involves R282.

This sequence belongs to the peptidase M17 family. In terms of assembly, homohexamer. Requires Mn(2+) as cofactor.

It localises to the cytoplasm. The enzyme catalyses Release of an N-terminal amino acid, Xaa, from a peptide or arylamide. Xaa is preferably Glu or Asp but may be other amino acids, including Leu, Met, His, Cys and Gln.. Probably plays an important role in intracellular peptide degradation. In Yersinia pestis bv. Antiqua (strain Antiqua), this protein is Peptidase B.